The sequence spans 224 residues: Protein DCL, chloroplastic (224 aa).

The transit peptide at 1–50 (MASICTSNFHFLCRKNNSSPISHHLLLSPSSLSFSRCGGLRLCRCAAVKT) directs the protein to the chloroplast. The segment at 76–98 (TTSESEELVKEESDDEVGKKSGD) is disordered. The segment covering 82–98 (ELVKEESDDEVGKKSGD) has biased composition (basic and acidic residues).

It localises to the plastid. Its subcellular location is the chloroplast. Has a function in the early stage of chloroplast development and palisade cell morphogenesis. Required for correct plastid ribosome assembly. Required for processing and maturation of 4.5S rRNA. The sequence is that of Protein DCL, chloroplastic (DCL) from Solanum lycopersicum (Tomato).